Consider the following 149-residue polypeptide: 3-dehydroquinate dehydratase (149 aa).

Y24 serves as the catalytic Proton acceptor. Residues N75, H81, and D88 each contribute to the substrate site. The active-site Proton donor is the H101. Residues 102–103 (LS) and R112 each bind substrate.

Belongs to the type-II 3-dehydroquinase family. In terms of assembly, homododecamer.

The enzyme catalyses 3-dehydroquinate = 3-dehydroshikimate + H2O. It participates in metabolic intermediate biosynthesis; chorismate biosynthesis; chorismate from D-erythrose 4-phosphate and phosphoenolpyruvate: step 3/7. Its function is as follows. Catalyzes a trans-dehydration via an enolate intermediate. The chain is 3-dehydroquinate dehydratase from Bartonella tribocorum (strain CIP 105476 / IBS 506).